We begin with the raw amino-acid sequence, 344 residues long: Beta-hexosaminidase (344 aa).

Substrate is bound by residues Asp-60, Arg-68, Arg-132, and 162 to 163; that span reads KH. Catalysis depends on His-175, which acts as the Proton donor/acceptor. Asp-247 acts as the Nucleophile in catalysis.

Belongs to the glycosyl hydrolase 3 family. NagZ subfamily.

Its subcellular location is the cytoplasm. It catalyses the reaction Hydrolysis of terminal non-reducing N-acetyl-D-hexosamine residues in N-acetyl-beta-D-hexosaminides.. Its pathway is cell wall biogenesis; peptidoglycan recycling. Functionally, plays a role in peptidoglycan recycling by cleaving the terminal beta-1,4-linked N-acetylglucosamine (GlcNAc) from peptide-linked peptidoglycan fragments, giving rise to free GlcNAc, anhydro-N-acetylmuramic acid and anhydro-N-acetylmuramic acid-linked peptides. The protein is Beta-hexosaminidase of Haemophilus ducreyi (strain 35000HP / ATCC 700724).